A 315-amino-acid polypeptide reads, in one-letter code: Aldo-keto reductase family 4 member C11 (315 aa).

A2 bears the N-acetylalanine mark. Residues 23 to 24 and D47 contribute to the NADP(+) site; that span reads TW. Catalysis depends on Y52, which acts as the Proton donor. Residues H114, 158-159, Q180, 207-213, 256-258, and 262-266 each bind NADP(+); these read SN, SPLGSPG, KST, and RIREN. S295 bears the Phosphoserine mark.

This sequence belongs to the aldo/keto reductase family.

Oxidoreductase that may act on a broad range of substrates such as ketosteroids, aldehydes, ketones and sugars. In Arabidopsis thaliana (Mouse-ear cress), this protein is Aldo-keto reductase family 4 member C11 (AKR4C11).